Here is a 126-residue protein sequence, read N- to C-terminus: Glycine cleavage system H protein (126 aa).

A Lipoyl-binding domain is found at 24-105 (TLTVGITDHA…AYGVWLFKLK (82 aa)). At lysine 65 the chain carries N6-lipoyllysine.

This sequence belongs to the GcvH family. As to quaternary structure, the glycine cleavage system is composed of four proteins: P, T, L and H. Requires (R)-lipoate as cofactor.

Functionally, the glycine cleavage system catalyzes the degradation of glycine. The H protein shuttles the methylamine group of glycine from the P protein to the T protein. The chain is Glycine cleavage system H protein from Burkholderia vietnamiensis (strain G4 / LMG 22486) (Burkholderia cepacia (strain R1808)).